The primary structure comprises 329 residues: Phosphate acyltransferase (329 aa).

The protein belongs to the PlsX family. In terms of assembly, homodimer. Probably interacts with PlsY.

It localises to the cytoplasm. It carries out the reaction a fatty acyl-[ACP] + phosphate = an acyl phosphate + holo-[ACP]. The protein operates within lipid metabolism; phospholipid metabolism. In terms of biological role, catalyzes the reversible formation of acyl-phosphate (acyl-PO(4)) from acyl-[acyl-carrier-protein] (acyl-ACP). This enzyme utilizes acyl-ACP as fatty acyl donor, but not acyl-CoA. This chain is Phosphate acyltransferase, found in Campylobacter concisus (strain 13826).